Reading from the N-terminus, the 346-residue chain is Endo-1,4-beta-xylanase B (346 aa).

An N-terminal signal peptide occupies residues methionine 1 to glycine 19. The GH10 domain maps to glycine 41–leucine 338. The Proton donor role is filled by glutamate 153. Glutamate 259 serves as the catalytic Nucleophile.

Belongs to the glycosyl hydrolase 10 (cellulase F) family.

The catalysed reaction is Endohydrolysis of (1-&gt;4)-beta-D-xylosidic linkages in xylans.. The protein is Endo-1,4-beta-xylanase B (xynB) of Thermotoga neapolitana.